The following is a 657-amino-acid chain: Methionine--tRNA ligase (657 aa).

The short motif at 13–23 (YYPSGNLHIGH) is the 'HIGH' region element. The 'KMSKS' region signature appears at 308–312 (KMSKS). An ATP-binding site is contributed by Lys311. The tRNA-binding domain occupies 557–657 (DFDKVEIKAA…SAIPNGAVIK (101 aa)).

It belongs to the class-I aminoacyl-tRNA synthetase family. MetG type 2B subfamily. Homodimer.

Its subcellular location is the cytoplasm. The catalysed reaction is tRNA(Met) + L-methionine + ATP = L-methionyl-tRNA(Met) + AMP + diphosphate. Is required not only for elongation of protein synthesis but also for the initiation of all mRNA translation through initiator tRNA(fMet) aminoacylation. This is Methionine--tRNA ligase from Staphylococcus aureus (strain MW2).